The sequence spans 473 residues: uncharacterized protein (473 aa).

The region spanning 26-254 (PKLYIASSGV…KMSEIFNSFG (229 aa)) is the SET domain.

This is an uncharacterized protein from Schizosaccharomyces pombe (strain 972 / ATCC 24843) (Fission yeast).